The following is a 297-amino-acid chain: MLLGSHVSMSGKEMLLGSSKEALSYGANTFMIYTGAPQNTRRKAIADLNIMNGRLHMKEHGMTNIVVHAPYIINIGNTEKPETFRLGVDFLQSEIERTAALEATQIVLHPGAHVGAGADAGIAKIIEGLNEVLSQDYPVQIALETMAGKGTECGRSFEELAKIIDGVTHNERLSVCFDTCHTHDAGYNIVEDFDGVLNEFDKLIGVDRIKVLHINDSKNVRGAAKDRHENIGFGHIGFDALNYVVHHPQLMAIPKILETPFVPLASDAKSKSAPYKAEIEMLRSSTFKPELIEALKG.

His-68, His-109, Glu-144, Asp-178, His-181, His-213, Asp-226, His-228, and Glu-258 together coordinate Zn(2+).

It belongs to the AP endonuclease 2 family. Zn(2+) serves as cofactor.

The enzyme catalyses Endonucleolytic cleavage to 5'-phosphooligonucleotide end-products.. Functionally, endonuclease IV plays a role in DNA repair. It cleaves phosphodiester bonds at apurinic or apyrimidinic (AP) sites, generating a 3'-hydroxyl group and a 5'-terminal sugar phosphate. This Lysinibacillus sphaericus (strain C3-41) protein is Probable endonuclease 4.